A 191-amino-acid chain; its full sequence is Thymidine kinase (191 aa).

ATP contacts are provided by residues 15-22 (GPMYSGKT) and 88-91 (DEAQ). Glu89 acts as the Proton acceptor in catalysis. Positions 145, 148, 183, and 186 each coordinate Zn(2+).

Belongs to the thymidine kinase family. Homotetramer.

It is found in the cytoplasm. It carries out the reaction thymidine + ATP = dTMP + ADP + H(+). The sequence is that of Thymidine kinase from Clostridium botulinum (strain Hall / ATCC 3502 / NCTC 13319 / Type A).